A 154-amino-acid polypeptide reads, in one-letter code: Transmembrane protein 35B (154 aa).

The N-terminal stretch at 1–22 (MALLLSVLRVLLGGFFALVGLA) is a signal peptide. The next 3 membrane-spanning stretches (helical) occupy residues 63-83 (IAVGFLELLAGLLLVMGPPML), 85-105 (EISNLFLILLMMGAIFTLAAL), and 112-132 (CIPAIVCLGFLLLLNVGQLLA).

Belongs to the DoxX family.

The protein localises to the membrane. The protein is Transmembrane protein 35B of Homo sapiens (Human).